A 303-amino-acid chain; its full sequence is Coenzyme PQQ synthesis protein B (303 aa).

It belongs to the PqqB family.

Its pathway is cofactor biosynthesis; pyrroloquinoline quinone biosynthesis. Its function is as follows. May be involved in the transport of PQQ or its precursor to the periplasm. This chain is Coenzyme PQQ synthesis protein B, found in Acinetobacter baumannii (strain AYE).